Here is a 61-residue protein sequence, read N- to C-terminus: MDPNCSCSTGGSCSCAGSCTCKACRCTSCKKSCCSCCPAGCARCAQGCICKGASDKCSCCA.

The segment at 1 to 29 (MDPNCSCSTGGSCSCAGSCTCKACRCTSC) is beta. The a divalent metal cation site is built by C5, C7, C13, C15, C19, C21, C24, C26, C29, C33, C34, C36, C37, C41, C44, C48, C50, C57, C59, and C60. Positions 30–61 (KKSCCSCCPAGCARCAQGCICKGASDKCSCCA) are alpha.

Belongs to the metallothionein superfamily. Type 1 family. In terms of assembly, monomer.

In terms of biological role, metallothioneins have a high content of cysteine residues that bind various heavy metals; these proteins are transcriptionally regulated by both heavy metals and glucocorticoids. This chain is Metallothionein-1C (MT1C), found in Sus scrofa (Pig).